A 501-amino-acid polypeptide reads, in one-letter code: uncharacterized protein (501 aa).

Residues 26–46 (ILLLLLGLIVLVNIGINVATM) form a helical membrane-spanning segment. Disordered regions lie at residues 316–384 (RGTE…VRRR) and 409–501 (EASH…EKLN). Residues 476 to 490 (RSSSLPPASTSTLRP) are compositionally biased toward low complexity.

Its subcellular location is the membrane. This is an uncharacterized protein from Homo sapiens (Human).